Reading from the N-terminus, the 186-residue chain is Interferon beta-2 (186 aa).

Positions 1–21 (MTHRCLLQMVLLLCFSTTALS) are cleaved as a signal peptide. An intrachain disulfide couples Cys52 to Cys161. Asn131 and Asn173 each carry an N-linked (GlcNAc...) asparagine glycan.

This sequence belongs to the alpha/beta interferon family. As to quaternary structure, monomer.

It is found in the secreted. Functionally, has antiviral, antibacterial and anticancer activities. This Bos taurus (Bovine) protein is Interferon beta-2 (IFNB2).